The primary structure comprises 108 residues: uncharacterized protein (108 aa).

Positions 1–24 are cleaved as a signal peptide; that stretch reads MNLWEFRFGKSFLFIPNFIMKVLA.

This sequence to M.jannaschii MJ0803.

This is an uncharacterized protein from Methanocaldococcus jannaschii (strain ATCC 43067 / DSM 2661 / JAL-1 / JCM 10045 / NBRC 100440) (Methanococcus jannaschii).